The chain runs to 476 residues: Glycogen synthase (476 aa).

Lysine 15 provides a ligand contact to ADP-alpha-D-glucose.

The protein belongs to the glycosyltransferase 1 family. Bacterial/plant glycogen synthase subfamily.

It carries out the reaction [(1-&gt;4)-alpha-D-glucosyl](n) + ADP-alpha-D-glucose = [(1-&gt;4)-alpha-D-glucosyl](n+1) + ADP + H(+). It functions in the pathway glycan biosynthesis; glycogen biosynthesis. Its function is as follows. Synthesizes alpha-1,4-glucan chains using ADP-glucose. In Halalkalibacterium halodurans (strain ATCC BAA-125 / DSM 18197 / FERM 7344 / JCM 9153 / C-125) (Bacillus halodurans), this protein is Glycogen synthase.